The primary structure comprises 760 residues: Mitochondrial intermediate peptidase (760 aa).

The N-terminal 19 residues, 1–19, are a transit peptide targeting the mitochondrion; the sequence is MLARSVRTLVVSPKTVFRF. Residue His543 participates in Zn(2+) binding. Glu544 is a catalytic residue. Residue His547 coordinates Zn(2+).

This sequence belongs to the peptidase M3 family. Zn(2+) is required as a cofactor.

Its subcellular location is the mitochondrion matrix. It carries out the reaction Release of an N-terminal octapeptide as second stage of processing of some proteins imported into the mitochondrion.. Functionally, cleaves proteins, imported into the mitochondrion, to their mature size. While most mitochondrial precursor proteins are processed to the mature form in one step by mitochondrial processing peptidase (MPP), the sequential cleavage by MIP of an octapeptide after initial processing by MPP is a required step for a subgroup of nuclear-encoded precursor proteins destined for the matrix or the inner membrane. This Leucoagaricus gongylophorus (Leaf-cutting ant fungus) protein is Mitochondrial intermediate peptidase (OCT1).